Consider the following 607-residue polypeptide: UvrABC system protein C (607 aa).

Positions 16-94 (GRPGVYRMFD…IKEWRPPYNI (79 aa)) constitute a GIY-YIG domain. The region spanning 203-238 (QQLGNELNAEMEKAAMALDFEKAAELRDQIALLRRV) is the UVR domain.

Belongs to the UvrC family. Interacts with UvrB in an incision complex.

It is found in the cytoplasm. Its function is as follows. The UvrABC repair system catalyzes the recognition and processing of DNA lesions. UvrC both incises the 5' and 3' sides of the lesion. The N-terminal half is responsible for the 3' incision and the C-terminal half is responsible for the 5' incision. In Pseudomonas putida (strain ATCC 700007 / DSM 6899 / JCM 31910 / BCRC 17059 / LMG 24140 / F1), this protein is UvrABC system protein C.